The primary structure comprises 712 residues: Anaerobic ribonucleoside-triphosphate reductase (712 aa).

In terms of domain architecture, ATP-cone spans 3–92 (PHVMKRDGCK…EYRHDRDIER (90 aa)). A Glycine radical domain is found at 583-708 (KKVNPYDKID…VKRRVKHLGN (126 aa)). Zn(2+) contacts are provided by cysteine 644, cysteine 647, cysteine 662, and cysteine 665. Residue glycine 681 is modified to Glycine radical.

This sequence belongs to the anaerobic ribonucleoside-triphosphate reductase family. In terms of assembly, homodimer. Forms a tetramer composed of two NrdD and two NrdG subunits.

It carries out the reaction a ribonucleoside 5'-triphosphate + formate + H(+) = a 2'-deoxyribonucleoside 5'-triphosphate + CO2 + H2O. The catalysed reaction is formate + ATP + H(+) = dATP + CO2 + H2O. The enzyme catalyses CTP + formate + H(+) = dCTP + CO2 + H2O. It catalyses the reaction GTP + formate + H(+) = dGTP + CO2 + H2O. It carries out the reaction UTP + formate + H(+) = dUTP + CO2 + H2O. Activated under anaerobic conditions by NrdG, a tightly associated activase. Activation involves the formation of a glycyl radical at Gly-681. Exposure of the activated reductase to oxygen leads to C-terminal truncation and inactivation of the protein, by cleavage at the N-terminal side of Gly-681. The presence of zinc protects the protein from proteolysis and prevents the formation of disulfide bridges within it. The enzyme shows a basal activity in the absence of any effector, but reduction is stimulated up to 10-fold by an appropriate modulator (dGTP for ATP reduction, ATP for CTP and UTP reduction, and dTTP for GTP reduction). dGTP and dTTP inhibit the reduction of the incorrect substrate, and dATP inhibits reduction of all four. These modulators act as allosteric effectors. In terms of biological role, catalyzes the conversion of ribonucleotides into deoxyribonucleotides, which are required for DNA synthesis and repair. Can reduce each of the four common ribonucleoside triphosphates. The polypeptide is Anaerobic ribonucleoside-triphosphate reductase (Escherichia coli (strain K12)).